The sequence spans 103 residues: Large ribosomal subunit protein bL21 (103 aa).

It belongs to the bacterial ribosomal protein bL21 family. Part of the 50S ribosomal subunit. Contacts protein L20.

Functionally, this protein binds to 23S rRNA in the presence of protein L20. This chain is Large ribosomal subunit protein bL21, found in Acetivibrio thermocellus (strain ATCC 27405 / DSM 1237 / JCM 9322 / NBRC 103400 / NCIMB 10682 / NRRL B-4536 / VPI 7372) (Clostridium thermocellum).